The sequence spans 1249 residues: Pleckstrin homology-like domain family B member 2 (1249 aa).

2 disordered regions span residues 64–85 (QPVS…SPSL) and 128–154 (DHYT…SSRN). Phosphoserine is present on residues S71 and S73. A compositionally biased stretch (polar residues) spans 74–84 (PMGTSVRSSPS). A compositionally biased stretch (basic and acidic residues) spans 128-143 (DHYTGRDSERSTRLSE). S156, S203, S241, and S244 each carry phosphoserine. Disordered stretches follow at residues 190-248 (SPIS…LSNM) and 264-289 (NQMS…GEKD). Over residues 231 to 248 (ENVSVRTRKYSGSSLSNM) the composition is skewed to polar residues. Over residues 267–283 (SPLSLPPRSSLGNSRRG) the composition is skewed to low complexity. A phosphoserine mark is found at S329, S333, S347, S380, S383, S389, S411, S416, S465, S486, and S510. The tract at residues 388–424 (DSDLESLRQSSETPQPVLRERKSSISSISGRDDLMDY) is disordered. 2 positions are modified to phosphothreonine: T546 and T570. 2 coiled-coil regions span residues 580–692 (TQEL…LDNC) and 718–803 (FEDL…LCNL). The interval 866-934 (VSQPQSSEHF…LGQSNSCGSV (69 aa)) is disordered. Residues 873–888 (EHFRSLEERKKQHKEG) are compositionally biased toward basic and acidic residues. T894 is modified (phosphothreonine). The span at 901 to 919 (TPSLSPHFSSATMGRSTTP) shows a compositional bias: polar residues. A coiled-coil region spans residues 1028–1094 (IARIEEMERL…QKLIEKEVKI (67 aa)). Residues 1139–1242 (EKTCRGYLIK…WMDVIVTGAE (104 aa)) form the PH domain.

In terms of assembly, interacts with FLNC. Interacts with AMOTL2; interaction may facilitate PHLDB2 localization to the myotube podosome cortex that surrounds the core. Part of a cortical microtubule stabilization complex (CMSC) composed of KANK1, PPFIA1, PPFIBP1, ERC1/ELKS, PHLDB2/LL5beta, CLASPs, KIF21A and possibly additional interactors; within CMSCs KANK1 and PHLDB2/LL5beta appear to be the core components for targeting of microtubule-binding proteins KIF21A and CLASPs, whereas PPFIA1, PPFIBP1 and ERC1/ELKS serve as scaffolds for protein clustering. Expressed at postsynaptic membranes of skeletal neuromuscular junctions (at protein level).

It localises to the cytoplasm. The protein resides in the membrane. It is found in the cell projection. The protein localises to the podosome. Its subcellular location is the cell cortex. Seems to be involved in the assembly of the postsynaptic apparatus. May play a role in acetyl-choline receptor (AChR) aggregation in the postsynaptic membrane. This chain is Pleckstrin homology-like domain family B member 2 (Phldb2), found in Mus musculus (Mouse).